We begin with the raw amino-acid sequence, 290 residues long: Eukaryotic translation initiation factor 3 subunit F-2 (290 aa).

Residues 12–150 (VRLQPLVLFQ…TRLYCAVTMG (139 aa)) form the MPN domain.

The protein belongs to the eIF-3 subunit F family. In terms of assembly, component of the eukaryotic translation initiation factor 3 (eIF-3) complex. The eIF-3 complex interacts with pix.

It localises to the cytoplasm. Its function is as follows. Component of the eukaryotic translation initiation factor 3 (eIF-3) complex, which is involved in protein synthesis of a specialized repertoire of mRNAs and, together with other initiation factors, stimulates binding of mRNA and methionyl-tRNAi to the 40S ribosome. The eIF-3 complex specifically targets and initiates translation of a subset of mRNAs involved in cell proliferation. In Drosophila mojavensis (Fruit fly), this protein is Eukaryotic translation initiation factor 3 subunit F-2.